The following is a 553-amino-acid chain: MSDIALTVSILALVAVVGLFIGNVKFRGIGLGIGGVLFGGIIVGHFVSQAGMTLSSDMLHVIQEFGLILFVYTIGIQVGPGFFASLRVSGLRLNLFAVLIVIIGGLVTAILHKLFDIPLPVVMGIFSGAVTNTPALGAGQQILRDLGTPMEMVDQMGMSYAMAYPFGICGILFTMWMLRVIFRVNVETEAQQHESSRTNGGALIKTINIRVENPNLHDLAIKDVPILNGDKIICSRLKREETLKVPSPDTIIQLGDLLHLVGQPADLHNAQLVIGQEVDTSLSTKGTDLRVERVVVTNENVLGKRIRDLHFKERYDVVISRLNRAGVELVASGDISLQFGDILNLVGRPSAIDAVANVLGNAQQKLQQVQMLPVFIGIGLGVLLGSIPVFVPGFPAALKLGLAGGPLIMALILGRIGSIGKLYWFMPPSANLALRELGIVLFLSVVGLKSGGDFVNTLVNGEGLSWIGYGALITAVPLITVGILARMLAKMNYLTMCGMLAGSMTDPPALAFANNLHPTSGAAALSYATVYPLVMFLRIITPQLLAVLFWSIG.

5 helical membrane passes run 4-24 (IALT…IGNV), 28-48 (GIGL…HFVS), 65-85 (FGLI…FFAS), 95-115 (LFAV…HKLF), and 158-178 (MSYA…MWML). 2 consecutive RCK C-terminal domains span residues 191 to 276 (QQHE…VIGQ) and 279 to 361 (DTSL…VLGN). Transmembrane regions (helical) follow at residues 371–391 (MLPV…PVFV), 393–413 (GFPA…ALIL), 439–459 (IVLF…NTLV), 464–484 (LSWI…VGIL), 493–513 (YLTM…LAFA), and 533–553 (LVMF…WSIG).

The protein belongs to the AAE transporter (TC 2.A.81) family. YidE subfamily.

The protein resides in the cell membrane. The polypeptide is Putative transport protein YidE (Shigella boydii serotype 18 (strain CDC 3083-94 / BS512)).